A 339-amino-acid chain; its full sequence is Biotin synthase (339 aa).

In terms of domain architecture, Radical SAM core spans 55–282; sequence NAVQLSTLLS…KAVVRLSAGR (228 aa). Residues cysteine 70, cysteine 74, and cysteine 77 each contribute to the [4Fe-4S] cluster site. [2Fe-2S] cluster contacts are provided by cysteine 114, cysteine 145, cysteine 205, and arginine 277.

It belongs to the radical SAM superfamily. Biotin synthase family. In terms of assembly, homodimer. [4Fe-4S] cluster is required as a cofactor. [2Fe-2S] cluster serves as cofactor.

It carries out the reaction (4R,5S)-dethiobiotin + (sulfur carrier)-SH + 2 reduced [2Fe-2S]-[ferredoxin] + 2 S-adenosyl-L-methionine = (sulfur carrier)-H + biotin + 2 5'-deoxyadenosine + 2 L-methionine + 2 oxidized [2Fe-2S]-[ferredoxin]. It participates in cofactor biosynthesis; biotin biosynthesis; biotin from 7,8-diaminononanoate: step 2/2. Functionally, catalyzes the conversion of dethiobiotin (DTB) to biotin by the insertion of a sulfur atom into dethiobiotin via a radical-based mechanism. The sequence is that of Biotin synthase from Burkholderia ambifaria (strain ATCC BAA-244 / DSM 16087 / CCUG 44356 / LMG 19182 / AMMD) (Burkholderia cepacia (strain AMMD)).